The following is a 319-amino-acid chain: GTP 3',8-cyclase (319 aa).

A Radical SAM core domain is found at 4–227; the sequence is KHGRKINYLR…VETEKSSTAL (224 aa). Arg13 is a binding site for GTP. 2 residues coordinate [4Fe-4S] cluster: Cys20 and Cys24. Tyr26 serves as a coordination point for S-adenosyl-L-methionine. Cys27 is a binding site for [4Fe-4S] cluster. Residue Arg63 coordinates GTP. Residue Gly67 participates in S-adenosyl-L-methionine binding. Thr94 serves as a coordination point for GTP. An S-adenosyl-L-methionine-binding site is contributed by Ser118. Lys155 provides a ligand contact to GTP. Position 189 (Met189) interacts with S-adenosyl-L-methionine. The [4Fe-4S] cluster site is built by Cys249 and Cys252. Residue 254-256 coordinates GTP; sequence RVR. [4Fe-4S] cluster is bound at residue Cys266.

The protein belongs to the radical SAM superfamily. MoaA family. In terms of assembly, monomer and homodimer. [4Fe-4S] cluster is required as a cofactor.

It carries out the reaction GTP + AH2 + S-adenosyl-L-methionine = (8S)-3',8-cyclo-7,8-dihydroguanosine 5'-triphosphate + 5'-deoxyadenosine + L-methionine + A + H(+). It participates in cofactor biosynthesis; molybdopterin biosynthesis. Catalyzes the cyclization of GTP to (8S)-3',8-cyclo-7,8-dihydroguanosine 5'-triphosphate. The protein is GTP 3',8-cyclase of Clostridium botulinum (strain ATCC 19397 / Type A).